The sequence spans 221 residues: 3-isopropylmalate dehydratase small subunit (221 aa).

The protein belongs to the LeuD family. LeuD type 1 subfamily. As to quaternary structure, heterodimer of LeuC and LeuD.

It catalyses the reaction (2R,3S)-3-isopropylmalate = (2S)-2-isopropylmalate. The protein operates within amino-acid biosynthesis; L-leucine biosynthesis; L-leucine from 3-methyl-2-oxobutanoate: step 2/4. Functionally, catalyzes the isomerization between 2-isopropylmalate and 3-isopropylmalate, via the formation of 2-isopropylmaleate. In Nitrosomonas europaea (strain ATCC 19718 / CIP 103999 / KCTC 2705 / NBRC 14298), this protein is 3-isopropylmalate dehydratase small subunit.